Reading from the N-terminus, the 257-residue chain is Ribosome maturation factor RimP (257 aa).

The tract at residues 182-257 (LRRGGPPAAD…SRLKDRDSLH (76 aa)) is disordered. The segment covering 191-205 (DEADEAEEAEDEEVA) has biased composition (acidic residues). A compositionally biased stretch (low complexity) spans 224-236 (KASPAAKPQKQAR).

Belongs to the RimP family.

The protein localises to the cytoplasm. Its function is as follows. Required for maturation of 30S ribosomal subunits. This is Ribosome maturation factor RimP from Methylobacterium radiotolerans (strain ATCC 27329 / DSM 1819 / JCM 2831 / NBRC 15690 / NCIMB 10815 / 0-1).